Consider the following 222-residue polypeptide: Putative fungistatic metabolite (222 aa).

WSC domains are found at residues 16 to 110 (AQTY…YGTS) and 127 to 222 (TTQY…YQWV).

In terms of biological role, inhibits the growth of the fungus P.tritici-repentis. This is Putative fungistatic metabolite from Chaetomium globosum (strain ATCC 6205 / CBS 148.51 / DSM 1962 / NBRC 6347 / NRRL 1970) (Soil fungus).